A 420-amino-acid polypeptide reads, in one-letter code: F-box/LRR-repeat protein At2g43260 (420 aa).

In terms of domain architecture, F-box spans Asn7–His53. 2 LRR repeats span residues Gln112–Asn135 and Val226–Val251.

The chain is F-box/LRR-repeat protein At2g43260 from Arabidopsis thaliana (Mouse-ear cress).